Consider the following 53-residue polypeptide: Large ribosomal subunit protein bL33A (53 aa).

Belongs to the bacterial ribosomal protein bL33 family.

In Mycoplasma pneumoniae (strain ATCC 29342 / M129 / Subtype 1) (Mycoplasmoides pneumoniae), this protein is Large ribosomal subunit protein bL33A (rpmG1).